Consider the following 357-residue polypeptide: Alanine racemase (357 aa).

The active-site Proton acceptor; specific for D-alanine is the Lys33. Lys33 bears the N6-(pyridoxal phosphate)lysine mark. Arg129 contacts substrate. Tyr253 functions as the Proton acceptor; specific for L-alanine in the catalytic mechanism. Residue Met301 coordinates substrate.

Belongs to the alanine racemase family. Pyridoxal 5'-phosphate serves as cofactor.

The enzyme catalyses L-alanine = D-alanine. The protein operates within amino-acid biosynthesis; D-alanine biosynthesis; D-alanine from L-alanine: step 1/1. Its function is as follows. Catalyzes the interconversion of L-alanine and D-alanine. May also act on other amino acids. This Pseudomonas entomophila (strain L48) protein is Alanine racemase (alr).